The chain runs to 232 residues: Large ribosomal subunit protein uL1 (232 aa).

This sequence belongs to the universal ribosomal protein uL1 family. In terms of assembly, part of the 50S ribosomal subunit.

In terms of biological role, binds directly to 23S rRNA. The L1 stalk is quite mobile in the ribosome, and is involved in E site tRNA release. Functionally, protein L1 is also a translational repressor protein, it controls the translation of the L11 operon by binding to its mRNA. The protein is Large ribosomal subunit protein uL1 of Thermosipho africanus (strain TCF52B).